We begin with the raw amino-acid sequence, 132 residues long: Salivary cystatin-L2 (132 aa).

A signal peptide spans 1–18; that stretch reads MTSSLALVLVFGGAAVCA. Positions 28-117 constitute a Cystatin domain; the sequence is ERSNQDDPEY…RTCTTVIYRN (90 aa). Residues 87–131 form a required for interaction with mouse ANXA2 region; sequence TCELTSTYNKDTCQANANAAQRTCTTVIYRNLQGEKSISSFECAA. 2 disulfides stabilise this stretch: C88/C99 and C110/C129.

Belongs to the cystatin family. In terms of assembly, monomer. Interacts (via loop 2) with mouse ANXA2; the interaction results in reduced activation of mouse NLRC4 inflammasome formation upon Anaplasma phagocytophilum infection. In terms of tissue distribution, detected in salivary gland and midgut.

It is found in the secreted. Contributes to the suppression of the host's immune response to tick salivary proteins and is important for successful feeding on hosts. Inhibitor of cysteine proteinases. Inhibits host immune responses, probably via its inhibition of host cathepsins. Inhibits host papain (in vitro). Inhibits host cathepsin L (CTSL) (in vitro). Inhibits host cathepsin L2 (CTSV) (in vitro). Attenuates IFN-beta (IFNB1)-triggered JAK/STAT signaling pathway in mouse dendritic cells. Suppresses induction of interferon-stimulated gene IRF7 and production of CXCL10 in lipopolysaccharide (LPS)-activated dendritic cells. Its function is as follows. (Microbial infection) Down-regulates TLR2-mediated host responses to infection by Borrelia burgdorferi and the production of chemokines CCL3 and CXCL10 by host dendritic cells. Enhances infection by the tick-transmitted pathogen B.burgdorferi (in vitro). In terms of biological role, (Microbial infection) Inhibits host inflammatory responses to Anaplasma phagocytophilum infection. Interacts with mouse ANXA2 and suppresses oligomerization of NLRC4, a key component of host inflammasomes that sense A.phagocytophilum infection. Indirectly targets caspase-1 (CASP1) activation and subsequent IL-1beta (IL1B) and IL18 release by inhibiting reactive oxygen species (ROS) production from NADPH oxidase complex in A.phagocytophilum-infected mouse macrophages. Functionally, (Microbial infection) Promotes replication of tick-borne encephalitis virus in mouse dendritic cells and reduces anti-viral effect of host IFN-beta (IFNB1). The protein is Salivary cystatin-L2 of Ixodes scapularis (Black-legged tick).